A 208-amino-acid chain; its full sequence is Small ribosomal subunit protein uS4 (208 aa).

The region spanning 96–159 is the S4 RNA-binding domain; the sequence is SRLDNIVYRL…KKNEKVLEAL (64 aa).

It belongs to the universal ribosomal protein uS4 family. Part of the 30S ribosomal subunit. Contacts protein S5. The interaction surface between S4 and S5 is involved in control of translational fidelity.

Functionally, one of the primary rRNA binding proteins, it binds directly to 16S rRNA where it nucleates assembly of the body of the 30S subunit. With S5 and S12 plays an important role in translational accuracy. This is Small ribosomal subunit protein uS4 from Mycoplasma capricolum subsp. capricolum (strain California kid / ATCC 27343 / NCTC 10154).